A 632-amino-acid chain; its full sequence is Galactan 5-O-arabinofuranosyltransferase (632 aa).

13 helical membrane-spanning segments follow: residues 10–30, 45–65, 76–96, 162–182, 184–204, 206–226, 242–259, 263–282, 298–318, 344–364, 375–395, 409–429, and 434–454; these read QIVLAAVVASGVAAVSLIAIA, ALTTVGQVGCLTGLLAVGGVW, LGGLVFVSAFTVVTLGMPLGA, WAITSITIAVAITLVLWWQMI, FEYALLVTIATAAVTLVYSSP, PYAAMITVLLPPALVLTWSGL, GWATVVGAGIFLGFAATW, LLAYTAFTVVLMTLLLATAL, LAGIVVIAAAIGAITWLPFLA, FPMLQFSLLGMICMLGTLWLI, ALMISVLAVYLWSLLSILTTL, LTVLLVTAGVFGFIETAQSLA, and AVLSVASAIGLAGAIAFSQDI. The Extracellular portion of the chain corresponds to 455–632; sequence PNVLRPDLTI…LAIRKPMGNA (178 aa).

This sequence belongs to the glycosyltransferase 85 family.

Its subcellular location is the cell membrane. It carries out the reaction Adds an alpha-D-arabinofuranosyl group from trans,octacis-decaprenylphospho-beta-D-arabinofuranose at the 5-O-position of the eighth, tenth and twelfth galactofuranose unit of the galactofuranan chain of [beta-D-galactofuranosyl-(1-&gt;5)-beta-D-galactofuranosyl-(1-&gt;6)]14-beta-D-galactofuranosyl-(1-&gt;5)-beta-D-galactofuranosyl-(1-&gt;4)-alpha-L-rhamnopyranosyl-(1-&gt;3)-N-acetyl-alpha-D-glucosaminyl-diphospho-trans,octacis-decaprenol.. Its pathway is cell wall biogenesis; cell wall polysaccharide biosynthesis. Involved in the biosynthesis of the arabinogalactan (AG) region of the mycolylarabinogalactan-peptidoglycan (mAGP) complex, an essential component of the mycobacterial cell wall. Catalyzes the addition of the first key arabinofuranosyl (Araf) residue from the sugar donor decaprenyl-phospho-arabinose (DPA) on the C-5 of a 6-linked galactofuranosyl (Galf) of the galactan domain, thus 'priming' the galactan for further elaboration by other arabinofuranosyltransferases. The chain is Galactan 5-O-arabinofuranosyltransferase from Mycobacterium leprae (strain TN).